Here is a 1005-residue protein sequence, read N- to C-terminus: MDLISTFLLHFLLLACSLPPGAVSLRTALRKSGKVGPPLDIKLGALNCTAFSIQWKTPKRSGSSIVGYTVFYSELGSDKSLREQSHNVPVGQDTLITEEVIGDLKPGTEYRVSIAAYSQTGKGRLSFPRHVTTLSQDSCLPPEAPHQPHVLVVSDSEVALSWRPGENEGSAPIQSYSVEFIRPDFDKSWTIIQERLQMDSMVIKGLDPDTNYQFAVRAMNAYGFSLRSQPSNTIRTLGPGEAGSGRYGPGYITDTGVSEDDDASEDELDLDVSFEEVKPLPATKVGNKKSKKTSVSNSEMDSRLAQPTSASLPETTVAVPPTPAQRKGKNSVAVMSRLFDMSCDETLCSADSFCVNDYAWGGSRCHCNLGKGGEACSEDIFIQYPQFFGHSYVTFEPLKNSYQAFQITLEFRAEAEDGLLLYCGESEHGRGDFMSLALIRRSLHFRFNCGTGMAIIISETKIKLGAWHSVTLYRDGLNGLLQLNNGTPVTGQSQGQYSKITFRTPLYLGGAPSAYWLVRATGTNRGFQGCVQSLAVNGKKIDMRPWPLGKALNGADVGECSSGICDEASCINGGTCAAIKADSYICLCPLGFRGRHCEDAFTLTIPQFRESLRSYAATPWPLEPQHYLSFTEFEITFRPDSGDGVLLYSYDTSSKDFLSIIMAAGHVEFRFDCGSGTGVLRSEDTLTLGQWHDLRVSRTAKNGILQVDKQKVVEGMAEGGFTQIKCNTDIFIGGVPNYDDVKKNSGILHPFSGSIQKIILNDRTIHVRHDFTSGVNVENAAHPCVGAPCAHGGSCRPRKEGYECDCPLGFEGLNCQKAITEAIEIPQFIGRSYLTYDNPNILKRVSGSRSNAFMRFKTTAKDGLLLWRGDSPMRPNSDFISLGLRDGALVFSYNLGSGVASIMVNGSFSDGRWHRVKAVRDGQSGKITVDDYGARTGKSPGMMRQLNINGALYVGGMKEIALRTNRQYMRGLVGCISHFTLSTDYHISLVEDAVDGKNINTCGAK.

The N-terminal stretch at Met-1 to Ser-24 is a signal peptide. 2 consecutive Fibronectin type-III domains span residues Pro-37–Gln-136 and Ala-144–Pro-239. Asn-47 carries N-linked (GlcNAc...) asparagine glycosylation. The interval Pro-281–Gly-328 is disordered. A compositionally biased stretch (polar residues) spans Ala-305–Glu-314. Residues Phe-339–Ser-377 enclose the EGF-like 1 domain. Disulfide bonds link Cys-343–Cys-354, Cys-348–Cys-365, Cys-367–Cys-376, Cys-530–Cys-560, Cys-565–Cys-576, Cys-570–Cys-586, Cys-588–Cys-597, Cys-784–Cys-795, Cys-789–Cys-804, Cys-806–Cys-815, and Cys-975–Cys-1002. Positions Ile-382 to Cys-560 constitute a Laminin G-like 1 domain. EGF-like domains follow at residues Ser-561–Glu-598 and Ala-780–Gln-816. Residues Ile-605–Cys-784 enclose the Laminin G-like 2 domain. In terms of domain architecture, Laminin G-like 3 spans Ile-823–Cys-1002.

Interacts with DAG1 alpha-dystroglycan. Interacts with GPR158 and GPR179; transsynaptic interaction is required for synaptic organization of photoreceptor cells. In terms of processing, O-glycosylated; contains chondroitin sulfate and heparan sulfate.

It is found in the secreted. The protein resides in the extracellular space. Its subcellular location is the extracellular matrix. The protein localises to the synaptic cleft. It localises to the presynaptic active zone. Its function is as follows. Involved in both the retinal photoreceptor ribbon synapse formation and physiological functions of visual perception. Plays a key role in the synaptic organization of photoreceptors by mediating transsynaptic interaction between alpha-dystroglycan and GPR179 on the postsynaptic membrane. Necessary for proper bipolar dendritic tip apposition to the photoreceptor ribbon synapse. Promotes matrix assembly and cell adhesiveness. This chain is Pikachurin (Egflam), found in Rattus norvegicus (Rat).